The primary structure comprises 213 residues: Transcription antitermination protein NusB (213 aa).

Belongs to the NusB family.

Its function is as follows. Involved in transcription antitermination. Required for transcription of ribosomal RNA (rRNA) genes. Binds specifically to the boxA antiterminator sequence of the ribosomal RNA (rrn) operons. The protein is Transcription antitermination protein NusB of Synechococcus elongatus (strain ATCC 33912 / PCC 7942 / FACHB-805) (Anacystis nidulans R2).